The chain runs to 728 residues: Catalase-peroxidase (728 aa).

Residues 91 to 218 (WHSAGTYRTA…LAAVQMGLIY (128 aa)) constitute a cross-link (tryptophyl-tyrosyl-methioninium (Trp-Tyr) (with M-244)). His-92 (proton acceptor) is an active-site residue. Residues 218–244 (YVNPEGPDGNPDPVAAARDIRDTFARM) constitute a cross-link (tryptophyl-tyrosyl-methioninium (Tyr-Met) (with W-91)). Residue His-259 coordinates heme b.

It belongs to the peroxidase family. Peroxidase/catalase subfamily. Homodimer or homotetramer. It depends on heme b as a cofactor. Post-translationally, formation of the three residue Trp-Tyr-Met cross-link is important for the catalase, but not the peroxidase activity of the enzyme.

The enzyme catalyses H2O2 + AH2 = A + 2 H2O. It carries out the reaction 2 H2O2 = O2 + 2 H2O. Bifunctional enzyme with both catalase and broad-spectrum peroxidase activity. The chain is Catalase-peroxidase from Burkholderia pseudomallei (strain 1710b).